Consider the following 450-residue polypeptide: Divalent metal cation transporter MntH (450 aa).

11 consecutive transmembrane segments (helical) span residues 34 to 54 (LSFL…GNWI), 61 to 81 (AQYG…AMLL), 108 to 128 (IAII…IAEV), 141 to 161 (IPLI…LFIM), 170 to 190 (AIVG…VYIS), 212 to 232 (GILY…NLYL), 263 to 283 (IQLS…ASLF), 305 to 325 (PVLG…ALLA), 361 to 381 (SLAV…AAKI), 383 to 403 (QLLV…LIPL), and 422 to 442 (VNII…YLIV).

Belongs to the NRAMP family.

It localises to the cell membrane. Its function is as follows. H(+)-stimulated, divalent metal cation uptake system. In Staphylococcus aureus (strain Mu3 / ATCC 700698), this protein is Divalent metal cation transporter MntH.